The following is a 200-amino-acid chain: Male-specific histamine-binding salivary protein (200 aa).

The signal sequence occupies residues 1-18; sequence MKVLLLVLGAALCQNADA. Residues S37, D41, D56, and W59 each contribute to the histamine site. Intrachain disulfides connect C65–C193 and C137–C169. Residue N79 is glycosylated (N-linked (GlcNAc...) asparagine). Histamine is bound by residues E97, Y115, F125, D138, E154, and W156.

Belongs to the calycin superfamily. Histamine-binding salivary protein family. As to quaternary structure, homodimer; disulcde-linked. Post-translationally, N-glycosylated. Expressed in salivary glands.

It localises to the secreted. Functionally, salivary tick protein that acts by scavenging histamine at the wound site, outcompeting histamine receptors for histamine, thereby overcoming host inflammatory responses. Binds histamine with a high-affinity (Kd=1.2 nM). Contains two binding histamine sites (H and L), that appear to bind histamine with differing affinities. This Rhipicephalus appendiculatus (Brown ear tick) protein is Male-specific histamine-binding salivary protein.